The primary structure comprises 396 residues: Enoyl-[acyl-carrier-protein] reductase [NADH] (396 aa).

NAD(+)-binding positions include 48 to 53 (GASTGY), 74 to 75 (FE), 111 to 112 (DA), and 139 to 140 (LA). Residue Y225 participates in substrate binding. Y235 functions as the Proton donor in the catalytic mechanism. NAD(+)-binding positions include K244 and 273 to 275 (VVT).

This sequence belongs to the TER reductase family. As to quaternary structure, monomer.

The catalysed reaction is a 2,3-saturated acyl-[ACP] + NAD(+) = a (2E)-enoyl-[ACP] + NADH + H(+). Its pathway is lipid metabolism; fatty acid biosynthesis. Functionally, involved in the final reduction of the elongation cycle of fatty acid synthesis (FAS II). Catalyzes the reduction of a carbon-carbon double bond in an enoyl moiety that is covalently linked to an acyl carrier protein (ACP). The protein is Enoyl-[acyl-carrier-protein] reductase [NADH] of Teredinibacter turnerae (strain ATCC 39867 / T7901).